The chain runs to 618 residues: Grainyhead-like protein 1 homolog (618 aa).

The interval 1–91 is transcription activation; that stretch reads MTQEYDNKRP…EGEHPEPEHS (91 aa). Residues 76-92 are compositionally biased toward basic and acidic residues; the sequence is SSAVKPEGEHPEPEHSK. Residues 76-100 are disordered; it reads SSAVKPEGEHPEPEHSKRNSIPNVT. Thr-208 carries the post-translational modification Phosphothreonine. A Grh/CP2 DB domain is found at 248-474; the sequence is SGNNFEYTLE…DLDTQPVLFI (227 aa). Interaction with DNA stretches follow at residues 380-389 and 427-430; these read TDFSSQKGVK and RKIR.

It belongs to the grh/CP2 family. Grainyhead subfamily. As to quaternary structure, binds DNA as homodimer. Homodimer, also forms heterodimers with GRHL2 or GRHL3. In terms of processing, methylation at Arg-9 and Lys-116 may be involved in regulating transcriptional activation. As to expression, isoform 1 is highly expressed in brain, pancreas, tonsil, placenta and kidney. Isoform 2 is highly expressed in brain and liver. Expression in the skin is confined to the suprabasal layers of the epidermis and to the hair follicles.

It is found in the nucleus. Functionally, transcription factor involved in epithelial development. Binds directly to the consensus DNA sequence 5'-AACCGGTT-3'. Important regulator of DSG1 in the context of hair anchorage and epidermal differentiation, participates in the maintenance of the skin barrier. There is no genetic interaction with GRHL3, nor functional cooperativity due to diverse target gene selectivity during epithelia development. May play a role in regulating glucose homeostasis and insulin signaling. The sequence is that of Grainyhead-like protein 1 homolog from Mus musculus (Mouse).